Consider the following 443-residue polypeptide: Glutamate-1-semialdehyde 2,1-aminomutase (443 aa).

Lys-277 carries the post-translational modification N6-(pyridoxal phosphate)lysine.

The protein belongs to the class-III pyridoxal-phosphate-dependent aminotransferase family. HemL subfamily. Homodimer. It depends on pyridoxal 5'-phosphate as a cofactor.

The protein localises to the cytoplasm. The catalysed reaction is (S)-4-amino-5-oxopentanoate = 5-aminolevulinate. The protein operates within porphyrin-containing compound metabolism; protoporphyrin-IX biosynthesis; 5-aminolevulinate from L-glutamyl-tRNA(Glu): step 2/2. The polypeptide is Glutamate-1-semialdehyde 2,1-aminomutase (Pseudarthrobacter chlorophenolicus (strain ATCC 700700 / DSM 12829 / CIP 107037 / JCM 12360 / KCTC 9906 / NCIMB 13794 / A6) (Arthrobacter chlorophenolicus)).